Consider the following 211-residue polypeptide: Superoxide dismutase [Mn], mitochondrial (211 aa).

Residues 1 to 24 (MLCRAVCSASRRLAPALGILGVRQ) constitute a mitochondrion transit peptide. A Mn(2+)-binding site is contributed by H50. The residue at position 58 (Y58) is a 3'-nitrotyrosine. N6-acetyllysine; alternate occurs at positions 68 and 75. N6-succinyllysine; alternate is present on residues K68 and K75. H98 provides a ligand contact to Mn(2+). K114 carries the N6-acetyllysine modification. N6-acetyllysine; alternate is present on residues K122 and K130. 2 positions are modified to N6-succinyllysine; alternate: K122 and K130. Residues D183 and H187 each coordinate Mn(2+). K202 carries the post-translational modification N6-acetyllysine.

Belongs to the iron/manganese superoxide dismutase family. As to quaternary structure, homotetramer. It depends on Mn(2+) as a cofactor. Post-translationally, nitrated under oxidative stress. Nitration coupled with oxidation inhibits the catalytic activity. Acetylation at Lys-122 decreases enzymatic activity. Deacetylated by SIRT3 upon exposure to ionizing radiations or after long fasting. In terms of processing, polyubiquitinated; leading to proteasomal degradation. Deubiquitinated by USP36 which increases protein stability.

It localises to the mitochondrion matrix. The enzyme catalyses 2 superoxide + 2 H(+) = H2O2 + O2. Its function is as follows. Destroys superoxide anion radicals which are normally produced within the cells and which are toxic to biological systems. This is Superoxide dismutase [Mn], mitochondrial (SOD2) from Cavia porcellus (Guinea pig).